Here is a 1683-residue protein sequence, read N- to C-terminus: ABC transporter 7 (1683 aa).

A helical membrane pass occupies residues 24-44 (DYLRILLPAVVIGLSVLNLGF). The tract at residues 53–93 (RSKSPSTHAYAPVSNGDNSRPGAHRTDISPDDDAIAQDDED) is disordered. Residues 81-93 (SPDDDAIAQDDED) show a composition bias toward acidic residues. 4 helical membrane passes run 127–147 (LSVV…VIAL), 157–177 (TLTG…LATL), 190–210 (HLWN…IGIF), and 221–241 (LAQI…FMAI). Residue asparagine 247 is glycosylated (N-linked (GlcNAc...) asparagine). Transmembrane regions (helical) follow at residues 336 to 356 (GWAV…KAIL) and 368 to 388 (SVVW…SLGD). The ABC transmembrane type-1 1 domain maps to 338-664 (AVMSGMFTFA…LGDMLAHVQE (327 aa)). Positions 451 to 473 (GDNDESEDGKDGDKDKEDSSDEQ) are disordered. Asparagine 489 is a glycosylation site (N-linked (GlcNAc...) asparagine). The next 2 helical transmembrane spans lie at 496 to 516 (YLHF…VLLY) and 518 to 538 (VLGM…PVNI). N-linked (GlcNAc...) asparagine glycosylation is present at asparagine 545. Transmembrane regions (helical) follow at residues 602–622 (VWAC…FFSF) and 632–648 (PLHP…FMLL). The ABC transporter 1 domain occupies 700–949 (IALKDAAFIW…GALGEEIAQK (250 aa)). ATP is bound at residue 742–749 (GPTGSGKT). The tract at residues 952–998 (SETPNISRIPSRVPSSVGEGSGNTLLDTDGDDHLSKPKNAKKAKKAE) is disordered. Asparagine 956 is a glycosylation site (N-linked (GlcNAc...) asparagine). A helical transmembrane segment spans residues 1016–1036 (LYLASMGSWWFWVVAGCIFIS). The ABC transmembrane type-1 2 domain maps to 1028-1351 (VVAGCIFISQ…NILWLVRLYS (324 aa)). The N-linked (GlcNAc...) asparagine glycan is linked to asparagine 1097. A run of 3 helical transmembrane segments spans residues 1111–1131 (AQYY…TAFL), 1182–1202 (VDQE…GITV), and 1204–1224 (VVLI…ITIA). Residue asparagine 1277 is glycosylated (N-linked (GlcNAc...) asparagine). A run of 2 helical transmembrane segments spans residues 1304-1324 (LLGD…IGVI) and 1327-1347 (GWAG…LWLV). An ABC transporter 2 domain is found at 1392–1649 (VEFINYTTSY…GEGGSFKSMC (258 aa)). N-linked (GlcNAc...) asparagine glycans are attached at residues asparagine 1396 and asparagine 1411. 1426–1433 (GRTGAGKS) lines the ATP pocket. N-linked (GlcNAc...) asparagine glycosylation is found at asparagine 1541 and asparagine 1552.

Belongs to the ABC transporter superfamily.

Its subcellular location is the membrane. In terms of biological role, ABC transporter; part of the gene cluster that mediates the biosynthesis of pyriculol and pyriculariol, two heptaketides that induce lesion formation upon application on rice leaves but are dispensable for pathogenicity. With the MFS transporter MFS1, is most likely responsible for pyriculol and pyriculariol secretion and thereby may contribute to intrinsic resistance. In Pyricularia oryzae (strain 70-15 / ATCC MYA-4617 / FGSC 8958) (Rice blast fungus), this protein is ABC transporter 7.